The primary structure comprises 164 residues: Large ribosomal subunit protein uL10 (164 aa).

The protein belongs to the universal ribosomal protein uL10 family. As to quaternary structure, part of the ribosomal stalk of the 50S ribosomal subunit. The N-terminus interacts with L11 and the large rRNA to form the base of the stalk. The C-terminus forms an elongated spine to which L12 dimers bind in a sequential fashion forming a multimeric L10(L12)X complex.

Forms part of the ribosomal stalk, playing a central role in the interaction of the ribosome with GTP-bound translation factors. The protein is Large ribosomal subunit protein uL10 of Aliivibrio salmonicida (strain LFI1238) (Vibrio salmonicida (strain LFI1238)).